A 126-amino-acid chain; its full sequence is Histone H2B 5 (126 aa).

The segment covering 1-12 (MPEPAKSAPAPK) has biased composition (low complexity). A disordered region spans residues 1-35 (MPEPAKSAPAPKKGSKKAVTKTQKKGDKKRRKSRK). An N6-acetyllysine mark is found at K6 and K13. Residues 13–34 (KGSKKAVTKTQKKGDKKRRKSR) show a composition bias toward basic residues. A Phosphoserine modification is found at S15. N6-acetyllysine is present on residues K16 and K21. O-linked (GlcNAc) serine glycosylation is present at S113. K121 participates in a covalent cross-link: Glycyl lysine isopeptide (Lys-Gly) (interchain with G-Cter in ubiquitin).

Belongs to the histone H2B family. In terms of assembly, the nucleosome is a histone octamer containing two molecules each of H2A, H2B, H3 and H4 assembled in one H3-H4 heterotetramer and two H2A-H2B heterodimers. The octamer wraps approximately 147 bp of DNA. In terms of processing, monoubiquitination of Lys-121 by the BRE1 gives a specific tag for epigenetic transcriptional activation and is also prerequisite for histone H3 'Lys-4' and 'Lys-79' methylation. Phosphorylated on Ser-15 during apoptosis; which facilitates apoptotic chromatin condensation. Post-translationally, glcNAcylation at Ser-113 promotes monoubiquitination of Lys-121. It fluctuates in response to extracellular glucose, and associates with transcribed genes.

Its subcellular location is the nucleus. The protein resides in the chromosome. Its function is as follows. Core component of nucleosome. Nucleosomes wrap and compact DNA into chromatin, limiting DNA accessibility to the cellular machineries which require DNA as a template. Histones thereby play a central role in transcription regulation, DNA repair, DNA replication and chromosomal stability. DNA accessibility is regulated via a complex set of post-translational modifications of histones, also called histone code, and nucleosome remodeling. The sequence is that of Histone H2B 5 (H2B-V) from Gallus gallus (Chicken).